Reading from the N-terminus, the 148-residue chain is Putative transmembrane protein ORF23 (148 aa).

Positions 1-18 (MVIILLGVSIVVPGLFLA) are cleaved as a signal peptide. Topologically, residues 19-118 (TETPQTNTFE…YVGWPSGAET (100 aa)) are extracellular. A helical transmembrane segment spans residues 119 to 139 (IITNIADIIIMATAVMIIGAI). Residues 140-148 (YTGYKVSIK) lie on the Cytoplasmic side of the membrane.

It is found in the host membrane. This chain is Putative transmembrane protein ORF23, found in His1 virus (isolate Australia/Victoria) (His1V).